The sequence spans 286 residues: 2-hydroxy-6-oxo-6-phenylhexa-2,4-dienoate hydrolase (286 aa).

Residues 42–43 (GG), asparagine 51, asparagine 111, serine 180, and arginine 190 each bind substrate. Histidine 265 acts as the Proton acceptor in catalysis. Tryptophan 266 is a binding site for substrate.

The protein belongs to the AB hydrolase superfamily. BphD family. In terms of assembly, homodimer.

The catalysed reaction is 2,6-dioxo-6-phenylhexa-3-enoate + H2O = 2-oxopent-4-enoate + benzoate + H(+). The protein operates within xenobiotic degradation; biphenyl degradation; 2-hydroxy-2,4-pentadienoate and benzoate from biphenyl: step 4/4. Functionally, catalyzes an unusual C-C bond hydrolysis of 2-hydroxy-6-oxo-6-phenylhexa-2,4-dienoic acid (HOPDA) to produce benzoic acid and 2-hydroxy-2,4-pentadienoic acid (HPD). The protein is 2-hydroxy-6-oxo-6-phenylhexa-2,4-dienoate hydrolase of Polaromonas naphthalenivorans (strain CJ2).